The chain runs to 376 residues: Queuine tRNA-ribosyltransferase (376 aa).

Asp89 serves as the catalytic Proton acceptor. Residues 89 to 93, Asp143, Gln194, and Gly221 contribute to the substrate site; that span reads DSGGF. The RNA binding stretch occupies residues 252-258; sequence GVGIPSN. The active-site Nucleophile is Asp271. The interval 276-280 is RNA binding; important for wobble base 34 recognition; that stretch reads ARNGR. Residues Cys309, Cys311, Cys314, and His340 each coordinate Zn(2+).

This sequence belongs to the queuine tRNA-ribosyltransferase family. As to quaternary structure, homodimer. Within each dimer, one monomer is responsible for RNA recognition and catalysis, while the other monomer binds to the replacement base PreQ1. Zn(2+) is required as a cofactor.

The enzyme catalyses 7-aminomethyl-7-carbaguanine + guanosine(34) in tRNA = 7-aminomethyl-7-carbaguanosine(34) in tRNA + guanine. The protein operates within tRNA modification; tRNA-queuosine biosynthesis. Its function is as follows. Catalyzes the base-exchange of a guanine (G) residue with the queuine precursor 7-aminomethyl-7-deazaguanine (PreQ1) at position 34 (anticodon wobble position) in tRNAs with GU(N) anticodons (tRNA-Asp, -Asn, -His and -Tyr). Catalysis occurs through a double-displacement mechanism. The nucleophile active site attacks the C1' of nucleotide 34 to detach the guanine base from the RNA, forming a covalent enzyme-RNA intermediate. The proton acceptor active site deprotonates the incoming PreQ1, allowing a nucleophilic attack on the C1' of the ribose to form the product. After dissociation, two additional enzymatic reactions on the tRNA convert PreQ1 to queuine (Q), resulting in the hypermodified nucleoside queuosine (7-(((4,5-cis-dihydroxy-2-cyclopenten-1-yl)amino)methyl)-7-deazaguanosine). This Clostridium botulinum (strain Okra / Type B1) protein is Queuine tRNA-ribosyltransferase.